The sequence spans 426 residues: Histidinol dehydrogenase (426 aa).

NAD(+) contacts are provided by Y125, Q187, and N210. Substrate is bound by residues S233, Q255, and H258. Zn(2+)-binding residues include Q255 and H258. Catalysis depends on proton acceptor residues E323 and H324. Substrate contacts are provided by H324, D357, E411, and H416. D357 is a binding site for Zn(2+). H416 provides a ligand contact to Zn(2+).

It belongs to the histidinol dehydrogenase family. Zn(2+) is required as a cofactor.

The enzyme catalyses L-histidinol + 2 NAD(+) + H2O = L-histidine + 2 NADH + 3 H(+). The protein operates within amino-acid biosynthesis; L-histidine biosynthesis; L-histidine from 5-phospho-alpha-D-ribose 1-diphosphate: step 9/9. Catalyzes the sequential NAD-dependent oxidations of L-histidinol to L-histidinaldehyde and then to L-histidine. This is Histidinol dehydrogenase (hisD) from Methanothermobacter thermautotrophicus (strain ATCC 29096 / DSM 1053 / JCM 10044 / NBRC 100330 / Delta H) (Methanobacterium thermoautotrophicum).